A 496-amino-acid chain; its full sequence is Lysine--tRNA ligase (496 aa).

2 residues coordinate Mg(2+): E409 and E416.

Belongs to the class-II aminoacyl-tRNA synthetase family. As to quaternary structure, homodimer. Requires Mg(2+) as cofactor.

It localises to the cytoplasm. The enzyme catalyses tRNA(Lys) + L-lysine + ATP = L-lysyl-tRNA(Lys) + AMP + diphosphate. This is Lysine--tRNA ligase from Streptococcus mutans serotype c (strain ATCC 700610 / UA159).